We begin with the raw amino-acid sequence, 127 residues long: MAYRKLGRTSAHRKAMLRNLTTDLIVNEKIVTTETRAKEVRKFVEKMITLGKKGDLASRRRAAAFVMNVVADVKEENDDVVVQSALQKLFDDLAPRFAERNGGYTRILKMSERRGDAAKMVVLELVD.

The protein belongs to the bacterial ribosomal protein bL17 family. As to quaternary structure, part of the 50S ribosomal subunit. Contacts protein L32.

The chain is Large ribosomal subunit protein bL17 from Ligilactobacillus salivarius (strain UCC118) (Lactobacillus salivarius).